A 270-amino-acid chain; its full sequence is F420 non-reducing hydrogenase II cytochrome subunit (270 aa).

Helical transmembrane passes span 27–47, 57–77, 139–159, 173–193, and 195–215; these read AIAM…WEFM, MIAV…NIFS, ILIP…IVLY, WIIS…VGFL, and VLHL…VGIL.

This sequence belongs to the HupC/HyaC/HydC family. In terms of assembly, composed of a large subunit (VhtA), a small subunit (VhtG) and a cytochrome subunit (VhtC). Heme b serves as cofactor.

The protein localises to the cell membrane. It carries out the reaction methanophenazine + H2 = dihydromethanophenazine. Its function is as follows. Part of the F420 non-reducing hydrogenase II complex that catalyzes the reduction of methanophenazine to dihydromethanophenazine. This chain is F420 non-reducing hydrogenase II cytochrome subunit, found in Methanosarcina mazei (strain ATCC BAA-159 / DSM 3647 / Goe1 / Go1 / JCM 11833 / OCM 88) (Methanosarcina frisia).